Here is a 615-residue protein sequence, read N- to C-terminus: DNA mismatch repair protein MutL (615 aa).

The segment covering 378 to 391 has biased composition (low complexity); that stretch reads PAPASGSRPAAPWP. A disordered region spans residues 378 to 397; the sequence is PAPASGSRPAAPWPNAQPGY.

It belongs to the DNA mismatch repair MutL/HexB family.

This protein is involved in the repair of mismatches in DNA. It is required for dam-dependent methyl-directed DNA mismatch repair. May act as a 'molecular matchmaker', a protein that promotes the formation of a stable complex between two or more DNA-binding proteins in an ATP-dependent manner without itself being part of a final effector complex. The chain is DNA mismatch repair protein MutL from Escherichia coli O127:H6 (strain E2348/69 / EPEC).